Here is a 508-residue protein sequence, read N- to C-terminus: Aspartyl/glutamyl-tRNA(Asn/Gln) amidotransferase subunit B (508 aa).

It belongs to the GatB/GatE family. GatB subfamily. In terms of assembly, heterotrimer of A, B and C subunits.

It carries out the reaction L-glutamyl-tRNA(Gln) + L-glutamine + ATP + H2O = L-glutaminyl-tRNA(Gln) + L-glutamate + ADP + phosphate + H(+). The enzyme catalyses L-aspartyl-tRNA(Asn) + L-glutamine + ATP + H2O = L-asparaginyl-tRNA(Asn) + L-glutamate + ADP + phosphate + 2 H(+). In terms of biological role, allows the formation of correctly charged Asn-tRNA(Asn) or Gln-tRNA(Gln) through the transamidation of misacylated Asp-tRNA(Asn) or Glu-tRNA(Gln) in organisms which lack either or both of asparaginyl-tRNA or glutaminyl-tRNA synthetases. The reaction takes place in the presence of glutamine and ATP through an activated phospho-Asp-tRNA(Asn) or phospho-Glu-tRNA(Gln). The polypeptide is Aspartyl/glutamyl-tRNA(Asn/Gln) amidotransferase subunit B (Salinibacter ruber (strain DSM 13855 / M31)).